We begin with the raw amino-acid sequence, 331 residues long: Small ribosomal subunit protein uS2 (331 aa).

It belongs to the universal ribosomal protein uS2 family.

This chain is Small ribosomal subunit protein uS2, found in Rhodopseudomonas palustris (strain ATCC BAA-98 / CGA009).